Here is a 264-residue protein sequence, read N- to C-terminus: Indole-3-glycerol phosphate synthase (264 aa).

This sequence belongs to the TrpC family.

It catalyses the reaction 1-(2-carboxyphenylamino)-1-deoxy-D-ribulose 5-phosphate + H(+) = (1S,2R)-1-C-(indol-3-yl)glycerol 3-phosphate + CO2 + H2O. It participates in amino-acid biosynthesis; L-tryptophan biosynthesis; L-tryptophan from chorismate: step 4/5. The sequence is that of Indole-3-glycerol phosphate synthase from Xylella fastidiosa (strain M12).